The following is a 150-amino-acid chain: D-aminoacyl-tRNA deacylase (150 aa).

The Gly-cisPro motif, important for rejection of L-amino acids signature appears at 138–139 (GP).

This sequence belongs to the DTD family. In terms of assembly, homodimer.

It is found in the cytoplasm. The catalysed reaction is glycyl-tRNA(Ala) + H2O = tRNA(Ala) + glycine + H(+). It carries out the reaction a D-aminoacyl-tRNA + H2O = a tRNA + a D-alpha-amino acid + H(+). Functionally, an aminoacyl-tRNA editing enzyme that deacylates mischarged D-aminoacyl-tRNAs. Also deacylates mischarged glycyl-tRNA(Ala), protecting cells against glycine mischarging by AlaRS. Acts via tRNA-based rather than protein-based catalysis; rejects L-amino acids rather than detecting D-amino acids in the active site. By recycling D-aminoacyl-tRNA to D-amino acids and free tRNA molecules, this enzyme counteracts the toxicity associated with the formation of D-aminoacyl-tRNA entities in vivo and helps enforce protein L-homochirality. In Chlorobium limicola (strain DSM 245 / NBRC 103803 / 6330), this protein is D-aminoacyl-tRNA deacylase.